The chain runs to 367 residues: UDP-N-acetylglucosamine--N-acetylmuramyl-(pentapeptide) pyrophosphoryl-undecaprenol N-acetylglucosamine transferase (367 aa).

UDP-N-acetyl-alpha-D-glucosamine-binding positions include 10–12 (TGG), asparagine 124, serine 196, and glutamine 300.

Belongs to the glycosyltransferase 28 family. MurG subfamily.

The protein localises to the cell membrane. The enzyme catalyses di-trans,octa-cis-undecaprenyl diphospho-N-acetyl-alpha-D-muramoyl-L-alanyl-D-glutamyl-meso-2,6-diaminopimeloyl-D-alanyl-D-alanine + UDP-N-acetyl-alpha-D-glucosamine = di-trans,octa-cis-undecaprenyl diphospho-[N-acetyl-alpha-D-glucosaminyl-(1-&gt;4)]-N-acetyl-alpha-D-muramoyl-L-alanyl-D-glutamyl-meso-2,6-diaminopimeloyl-D-alanyl-D-alanine + UDP + H(+). It participates in cell wall biogenesis; peptidoglycan biosynthesis. In terms of biological role, cell wall formation. Catalyzes the transfer of a GlcNAc subunit on undecaprenyl-pyrophosphoryl-MurNAc-pentapeptide (lipid intermediate I) to form undecaprenyl-pyrophosphoryl-MurNAc-(pentapeptide)GlcNAc (lipid intermediate II). This Natranaerobius thermophilus (strain ATCC BAA-1301 / DSM 18059 / JW/NM-WN-LF) protein is UDP-N-acetylglucosamine--N-acetylmuramyl-(pentapeptide) pyrophosphoryl-undecaprenol N-acetylglucosamine transferase.